A 549-amino-acid chain; its full sequence is uncharacterized protein (549 aa).

This is an uncharacterized protein from Acanthamoeba polyphaga (Amoeba).